Consider the following 94-residue polypeptide: Long neurotoxin-like OH-31 (94 aa).

The signal sequence occupies residues 1 to 19 (MKTLLLTLVVVTILCLDLG). 4 cysteine pairs are disulfide-bonded: C35/C55, C37/C66, C70/C81, and C82/C87.

It belongs to the three-finger toxin family. Long-chain subfamily. Type II alpha-neurotoxin sub-subfamily. As to expression, expressed by the venom gland.

The protein resides in the secreted. In terms of biological role, binds with high affinity to muscular nicotinic acetylcholine receptors (nAChRs), whereas it binds with a low affinity to neuronal alpha-7/CHRNA7 nAChRs. The sequence is that of Long neurotoxin-like OH-31 from Ophiophagus hannah (King cobra).